Reading from the N-terminus, the 419-residue chain is Protein translocase subunit SecY (419 aa).

Transmembrane regions (helical) follow at residues I19–V39, V64–F84, I113–F133, F143–I163, G167–N189, S202–L222, F255–T275, I299–I319, F359–L379, and G380–N400.

This sequence belongs to the SecY/SEC61-alpha family. As to quaternary structure, component of the plastid Sec protein translocase complex, which is composed of at least SecY and SecE.

It localises to the plastid. The protein resides in the chloroplast thylakoid membrane. Its function is as follows. The central subunit of the protein translocation channel SecYE. Consists of two halves formed by TMs 1-5 and 6-10. These two domains form a lateral gate at the front which open onto the bilayer between TMs 2 and 7, and are clamped together by SecE at the back. The channel is closed by both a pore ring composed of hydrophobic SecY resides and a short helix (helix 2A) on the extracellular side of the membrane which forms a plug. This chain is Protein translocase subunit SecY, found in Diacronema lutheri (Unicellular marine alga).